A 279-amino-acid chain; its full sequence is Large ribosomal subunit protein uL2 (279 aa).

Residues 223-279 (TVRGSAMNPNDHPHGGGEGRSPVGMDAPRTPWGKRHMGVKTRNNKKSSTSMIVRRRK) are disordered. The segment covering 254 to 267 (WGKRHMGVKTRNNK) has biased composition (basic residues).

Belongs to the universal ribosomal protein uL2 family. As to quaternary structure, part of the 50S ribosomal subunit. Forms a bridge to the 30S subunit in the 70S ribosome.

Its function is as follows. One of the primary rRNA binding proteins. Required for association of the 30S and 50S subunits to form the 70S ribosome, for tRNA binding and peptide bond formation. It has been suggested to have peptidyltransferase activity; this is somewhat controversial. Makes several contacts with the 16S rRNA in the 70S ribosome. The sequence is that of Large ribosomal subunit protein uL2 from Ureaplasma urealyticum serovar 10 (strain ATCC 33699 / Western).